A 21-amino-acid polypeptide reads, in one-letter code: Cupiennin-6c (21 aa).

Residue S21 is modified to Serine amide.

As to expression, expressed by the venom gland.

It is found in the secreted. In Cupiennius salei (American wandering spider), this protein is Cupiennin-6c.